The chain runs to 322 residues: uncharacterized protein (322 aa).

The helical transmembrane segment at 212 to 234 (VCALLVGAISVATAGAAFSIIIV) threads the bilayer.

It is found in the membrane. This is an uncharacterized protein from Rickettsia prowazekii (strain Madrid E).